Reading from the N-terminus, the 348-residue chain is Phospho-2-dehydro-3-deoxyheptonate aldolase, Trp-sensitive (348 aa).

Belongs to the class-I DAHP synthase family.

The enzyme catalyses D-erythrose 4-phosphate + phosphoenolpyruvate + H2O = 7-phospho-2-dehydro-3-deoxy-D-arabino-heptonate + phosphate. It participates in metabolic intermediate biosynthesis; chorismate biosynthesis; chorismate from D-erythrose 4-phosphate and phosphoenolpyruvate: step 1/7. Its function is as follows. Stereospecific condensation of phosphoenolpyruvate (PEP) and D-erythrose-4-phosphate (E4P) giving rise to 3-deoxy-D-arabino-heptulosonate-7-phosphate (DAHP). In Salmonella typhi, this protein is Phospho-2-dehydro-3-deoxyheptonate aldolase, Trp-sensitive (aroH).